The sequence spans 153 residues: Transcription antitermination protein NusB (153 aa).

The protein belongs to the NusB family.

Its function is as follows. Involved in transcription antitermination. Required for transcription of ribosomal RNA (rRNA) genes. Binds specifically to the boxA antiterminator sequence of the ribosomal RNA (rrn) operons. The sequence is that of Transcription antitermination protein NusB from Clostridium tetani (strain Massachusetts / E88).